The sequence spans 395 residues: Type II restriction enzyme BsuFI (395 aa).

As to quaternary structure, homodimer. Mg(2+) serves as cofactor.

It catalyses the reaction Endonucleolytic cleavage of DNA to give specific double-stranded fragments with terminal 5'-phosphates.. In terms of biological role, a P subtype restriction enzyme that recognizes the double-stranded sequence 5'-CCGG-3' and cleaves after C-1. The protein is Type II restriction enzyme BsuFI (hsdFR) of Bacillus subtilis.